The following is a 716-amino-acid chain: DNA ligase (716 aa).

Residues 47–51 (DATYD), 96–97 (SL), and Glu130 each bind NAD(+). Lys132 functions as the N6-AMP-lysine intermediate in the catalytic mechanism. Positions 153, 190, 306, and 330 each coordinate NAD(+). Zn(2+)-binding residues include Cys435, Cys438, Cys453, and Cys459. In terms of domain architecture, BRCT spans 638–716 (RSDSAVAGKT…EDEWLKLIEG (79 aa)).

Belongs to the NAD-dependent DNA ligase family. LigA subfamily. Requires Mg(2+) as cofactor. Mn(2+) serves as cofactor.

It catalyses the reaction NAD(+) + (deoxyribonucleotide)n-3'-hydroxyl + 5'-phospho-(deoxyribonucleotide)m = (deoxyribonucleotide)n+m + AMP + beta-nicotinamide D-nucleotide.. DNA ligase that catalyzes the formation of phosphodiester linkages between 5'-phosphoryl and 3'-hydroxyl groups in double-stranded DNA using NAD as a coenzyme and as the energy source for the reaction. It is essential for DNA replication and repair of damaged DNA. This Nitrobacter winogradskyi (strain ATCC 25391 / DSM 10237 / CIP 104748 / NCIMB 11846 / Nb-255) protein is DNA ligase.